We begin with the raw amino-acid sequence, 1132 residues long: Phytochrome B (1132 aa).

A compositionally biased stretch (basic residues) spans 1–11 (MASGSRTKHSH). Residues 1–27 (MASGSRTKHSHQSGQGQVQAQSSGTSN) form a disordered region. Low complexity predominate over residues 12–26 (QSGQGQVQAQSSGTS). The 179-residue stretch at 231–409 (DVKLLCDTVV…AFGLQLNMEL (179 aa)) folds into the GAF domain. Phytochromobilin is bound at residue C336. 2 PAS domains span residues 623–694 (VARE…LRGE) and 757–828 (DYKA…MIVL). A Histidine kinase domain is found at 905-1125 (YLCQEIKSPL…LIILDLPMTR (221 aa)).

The protein belongs to the phytochrome family. As to quaternary structure, homodimer. In terms of processing, contains one covalently linked phytochromobilin chromophore.

Its function is as follows. Regulatory photoreceptor which exists in two forms that are reversibly interconvertible by light: the Pr form that absorbs maximally in the red region of the spectrum and the Pfr form that absorbs maximally in the far-red region. Photoconversion of Pr to Pfr induces an array of morphogenic responses, whereas reconversion of Pfr to Pr cancels the induction of those responses. Pfr controls the expression of a number of nuclear genes including those encoding the small subunit of ribulose-bisphosphate carboxylase, chlorophyll A/B binding protein, protochlorophyllide reductase, rRNA, etc. It also controls the expression of its own gene(s) in a negative feedback fashion. The chain is Phytochrome B (PHYB) from Nicotiana tabacum (Common tobacco).